A 298-amino-acid polypeptide reads, in one-letter code: Spermidine synthase (298 aa).

The region spanning 13 to 248 is the PABS domain; that stretch reads DGWFREINNM…GSIGFVVASK (236 aa). Gln-44 is a binding site for S-adenosyl 3-(methylsulfanyl)propylamine. Tyr-74 lines the putrescine pocket. S-adenosyl 3-(methylsulfanyl)propylamine-binding positions include Gln-75, Asp-99, Asp-119, 150 to 151, and Asp-168; that span reads DG. Asp-168 functions as the Proton acceptor in the catalytic mechanism. Residues 168 to 171 and Tyr-236 each bind putrescine; that span reads DSSD.

It belongs to the spermidine/spermine synthase family.

It catalyses the reaction S-adenosyl 3-(methylsulfanyl)propylamine + putrescine = S-methyl-5'-thioadenosine + spermidine + H(+). It functions in the pathway amine and polyamine biosynthesis; spermidine biosynthesis; spermidine from putrescine: step 1/1. This Schizosaccharomyces pombe (strain 972 / ATCC 24843) (Fission yeast) protein is Spermidine synthase.